Consider the following 305-residue polypeptide: Oligopeptide transport system permease protein OppC (305 aa).

The next 6 helical transmembrane spans lie at 43–63 (AMVG…APMF), 105–125 (ISIF…VIWG), 166–185 (LFTI…ARIV), 212–232 (LFKH…TLTV), 236–256 (IFTE…LASW), and 274–294 (LFFP…VGDG). In terms of domain architecture, ABC transmembrane type-1 spans 103–292 (ARISIFIGVA…ITMFGFNVVG (190 aa)).

Belongs to the binding-protein-dependent transport system permease family. OppBC subfamily. As to quaternary structure, the complex is composed of two ATP-binding proteins (OppD and OppF), two transmembrane proteins (OppB and OppC) and a solute-binding protein (OppA).

It is found in the cell membrane. Part of the ABC transporter complex OppABCDF involved in the uptake of oligopeptides. Probably responsible for the translocation of the substrate across the membrane. Required for sporulation and genetic competence. The polypeptide is Oligopeptide transport system permease protein OppC (Bacillus subtilis (strain 168)).